The following is a 147-amino-acid chain: Leghemoglobin (147 aa).

A Globin domain is found at 2 to 147 (GFTADQEALV…LASAIKKAMS (146 aa)). A nitrated tyrosine mark is found at Tyr-25 and Tyr-30. Ser-45 lines the heme b pocket. Ser-45 carries the post-translational modification Phosphoserine. Residue His-62 coordinates O2. Residues Lys-65, His-94, and Lys-97 each coordinate heme b. Tyr-135 is modified (nitrated tyrosine).

The protein belongs to the plant globin family. As to quaternary structure, monomer. In terms of processing, nitrated in effective nodules and particularly in hypoxic conditions; this mechanism may play a protective role in the symbiosis by buffering toxic peroxynitrite NO(2)(-). Nitration level decrease during nodule senescence. Phosphorylation at Ser-45 disrupts the molecular environment of its porphyrin ring oxygen binding pocket, thus leading to a reduced oxygen consumption and to the delivery of oxygen O(2) to symbiosomes. In terms of tissue distribution, root nodules.

It is found in the cytoplasm. It localises to the cytosol. The protein resides in the nucleus. In terms of biological role, leghemoglobin that reversibly binds oxygen O(2) through a pentacoordinated heme iron. In root nodules, facilitates the diffusion of oxygen to the bacteroids while preventing the bacterial nitrogenase from being inactivated by buffering dioxygen, nitric oxide and carbon monoxide, and promoting the formation of reactive oxygen species (ROS, e.g. H(2)O(2)). This role is essential for symbiotic nitrogen fixation (SNF). This chain is Leghemoglobin (LB3), found in Medicago sativa (Alfalfa).